Here is a 403-residue protein sequence, read N- to C-terminus: S-adenosylmethionine synthase (403 aa).

Histidine 16 provides a ligand contact to ATP. Mg(2+) is bound at residue aspartate 18. Position 44 (glutamate 44) interacts with K(+). 2 residues coordinate L-methionine: glutamate 57 and glutamine 100. The interval 100 to 110 is flexible loop; sequence QSSDIAQGVDR. Residues 165-167, aspartate 242, 248-249, alanine 265, and lysine 269 contribute to the ATP site; these read DAK and RK. Aspartate 242 lines the L-methionine pocket. Lysine 273 lines the L-methionine pocket.

The protein belongs to the AdoMet synthase family. As to quaternary structure, homotetramer; dimer of dimers. Mg(2+) is required as a cofactor. Requires K(+) as cofactor.

It localises to the cytoplasm. The enzyme catalyses L-methionine + ATP + H2O = S-adenosyl-L-methionine + phosphate + diphosphate. It participates in amino-acid biosynthesis; S-adenosyl-L-methionine biosynthesis; S-adenosyl-L-methionine from L-methionine: step 1/1. In terms of biological role, catalyzes the formation of S-adenosylmethionine (AdoMet) from methionine and ATP. The overall synthetic reaction is composed of two sequential steps, AdoMet formation and the subsequent tripolyphosphate hydrolysis which occurs prior to release of AdoMet from the enzyme. This Nitrosococcus oceani (strain ATCC 19707 / BCRC 17464 / JCM 30415 / NCIMB 11848 / C-107) protein is S-adenosylmethionine synthase.